The chain runs to 386 residues: Caspase-1-A (386 aa).

Positions Met-1–Glu-100 are excised as a propeptide. The 67-residue stretch at Ser-22–Leu-88 folds into the CARD domain. Residues His-218 and Cys-274 contribute to the active site. Positions Asp-287 to Asp-296 are excised as a propeptide.

This sequence belongs to the peptidase C14A family. As to quaternary structure, heterotetramer that consists of two anti-parallel arranged heterodimers, each one formed by a 20 kDa (Caspase-1 subunit p20) and a 10 kDa (Caspase-1 subunit p10) subunit. In terms of assembly, heterotetramer that consists of two anti-parallel arranged heterodimers, each one formed by a 20 kDa (Caspase-1 subunit p20) and a 10 kDa (Caspase-1 subunit p10) subunit. Can form a heterodimer with isoform epsilon which then has an inhibitory effect. Post-translationally, the two subunits are derived from the precursor sequence by an autocatalytic mechanism.

It is found in the cytoplasm. Its subcellular location is the cell membrane. The catalysed reaction is Strict requirement for an Asp residue at position P1 and has a preferred cleavage sequence of Tyr-Val-Ala-Asp-|-.. In terms of biological role, thiol protease involved in a variety of inflammatory processes by proteolytically cleaving other proteins, such as the precursors of the inflammatory cytokines interleukin-1 beta (IL1B) and interleukin 18 (IL18) as well as the pyroptosis inducer Gasdermin-D (GSDMD), into active mature peptides. Plays a key role in cell immunity as an inflammatory response initiator: once activated through formation of an inflammasome complex, it initiates a pro-inflammatory response through the cleavage of the two inflammatory cytokines IL1B and IL18, releasing the mature cytokines which are involved in a variety of inflammatory processes. Cleaves a tetrapeptide after an Asp residue at position P1. Also initiates pyroptosis, a programmed lytic cell death pathway, through cleavage of GSDMD. The chain is Caspase-1-A (casp1-a) from Xenopus laevis (African clawed frog).